We begin with the raw amino-acid sequence, 409 residues long: NADH-quinone oxidoreductase subunit D (409 aa).

Belongs to the complex I 49 kDa subunit family. NDH-1 is composed of 14 different subunits. Subunits NuoB, C, D, E, F, and G constitute the peripheral sector of the complex.

It localises to the cell inner membrane. The catalysed reaction is a quinone + NADH + 5 H(+)(in) = a quinol + NAD(+) + 4 H(+)(out). Its function is as follows. NDH-1 shuttles electrons from NADH, via FMN and iron-sulfur (Fe-S) centers, to quinones in the respiratory chain. The immediate electron acceptor for the enzyme in this species is believed to be ubiquinone. Couples the redox reaction to proton translocation (for every two electrons transferred, four hydrogen ions are translocated across the cytoplasmic membrane), and thus conserves the redox energy in a proton gradient. This Helicobacter pylori (strain HPAG1) protein is NADH-quinone oxidoreductase subunit D.